The following is a 101-amino-acid chain: ATP-dependent Clp protease adapter protein ClpS 1 (101 aa).

This sequence belongs to the ClpS family. As to quaternary structure, binds to the N-terminal domain of the chaperone ClpA.

In terms of biological role, involved in the modulation of the specificity of the ClpAP-mediated ATP-dependent protein degradation. The polypeptide is ATP-dependent Clp protease adapter protein ClpS 1 (Bradyrhizobium diazoefficiens (strain JCM 10833 / BCRC 13528 / IAM 13628 / NBRC 14792 / USDA 110)).